A 157-amino-acid polypeptide reads, in one-letter code: Nicotinate dehydrogenase small FeS subunit (157 aa).

The region spanning 4–80 (ITINLNLNGE…ESTIITLEGV (77 aa)) is the 2Fe-2S ferredoxin-type domain. [2Fe-2S] cluster-binding residues include Cys42, Cys47, Cys50, Cys62, Cys101, Cys104, Cys136, and Cys138.

Heterooctamer of NDHM, NDHL, NDHS and NDHF. Dimer of heterotetramers. Requires [2Fe-2S] cluster as cofactor.

It catalyses the reaction nicotinate + NADP(+) + H2O = 6-hydroxynicotinate + NADPH + H(+). It participates in cofactor degradation; nicotinate degradation; 6-hydroxynicotinate from nicotinate: step 1/1. Its activity is regulated as follows. Reversibly inactivated by selenide and sulfide. Not inhibited by cyanide. In terms of biological role, catalyzes the hydroxylation of nicotinate to 6-hydroxynicotinate. Also active against 2-pyrazinecarboxylic acid, but inactive against other nicotinate analogs. This Eubacterium barkeri (Clostridium barkeri) protein is Nicotinate dehydrogenase small FeS subunit (ndhS).